The chain runs to 211 residues: Ribosomal RNA large subunit methyltransferase E (211 aa).

S-adenosyl-L-methionine-binding residues include G60, W62, D80, D96, and D121. The active-site Proton acceptor is K161.

The protein belongs to the class I-like SAM-binding methyltransferase superfamily. RNA methyltransferase RlmE family.

The protein localises to the cytoplasm. It catalyses the reaction uridine(2552) in 23S rRNA + S-adenosyl-L-methionine = 2'-O-methyluridine(2552) in 23S rRNA + S-adenosyl-L-homocysteine + H(+). Specifically methylates the uridine in position 2552 of 23S rRNA at the 2'-O position of the ribose in the fully assembled 50S ribosomal subunit. This Cellvibrio japonicus (strain Ueda107) (Pseudomonas fluorescens subsp. cellulosa) protein is Ribosomal RNA large subunit methyltransferase E.